Reading from the N-terminus, the 275-residue chain is Adenosylcobinamide-GDP ribazoletransferase (275 aa).

A run of 6 helical transmembrane segments spans residues 53–73 (WFVFLLFQFLFGPTIAFTISL), 113–133 (VGSFGAAGISLLLLLKVLGVS), 144–164 (LPFTFGSSAQIHLLSVWLYFV), 204–224 (FACIFGVTPFLALVYLHPYFL), 225–245 (LSLLCIIPSFVYMFSLMKRWI), and 253–273 (LGAVQQVVETCIWISGVFVWI).

Belongs to the CobS family. It depends on Mg(2+) as a cofactor.

Its subcellular location is the cell inner membrane. It carries out the reaction alpha-ribazole + adenosylcob(III)inamide-GDP = adenosylcob(III)alamin + GMP + H(+). The catalysed reaction is alpha-ribazole 5'-phosphate + adenosylcob(III)inamide-GDP = adenosylcob(III)alamin 5'-phosphate + GMP + H(+). The protein operates within cofactor biosynthesis; adenosylcobalamin biosynthesis; adenosylcobalamin from cob(II)yrinate a,c-diamide: step 7/7. In terms of biological role, joins adenosylcobinamide-GDP and alpha-ribazole to generate adenosylcobalamin (Ado-cobalamin). Also synthesizes adenosylcobalamin 5'-phosphate from adenosylcobinamide-GDP and alpha-ribazole 5'-phosphate. This chain is Adenosylcobinamide-GDP ribazoletransferase, found in Leptospira biflexa serovar Patoc (strain Patoc 1 / Ames).